Reading from the N-terminus, the 345-residue chain is 4-hydroxyproline 2-epimerase 1 (345 aa).

Residue glutamine 85 coordinates substrate. Serine 93 serves as the catalytic Proton acceptor. Residues 94-95 and aspartate 251 each bind substrate; that span reads GS. The Proton donor role is filled by cysteine 255. 256–257 is a substrate binding site; sequence GT.

Belongs to the proline racemase family.

It carries out the reaction trans-4-hydroxy-L-proline = cis-4-hydroxy-D-proline. In terms of biological role, catalyzes the epimerization of trans-4-hydroxy-L-proline (t4LHyp) to cis-4-hydroxy-D-proline (c4DHyp). May be involved in a degradation pathway of t4LHyp. Can also catalyze the epimerization of trans-3-hydroxy-L-proline (t3LHyp) to cis-3-hydroxy-D-proline (c3DHyp) in vitro. Displays no proline racemase activity. In Rhizobium rhizogenes (strain K84 / ATCC BAA-868) (Agrobacterium radiobacter), this protein is 4-hydroxyproline 2-epimerase 1.